We begin with the raw amino-acid sequence, 284 residues long: Bifunctional protein FolD (284 aa).

NADP(+) is bound by residues 166–168 (GAS), Ser-191, and Ile-232.

Belongs to the tetrahydrofolate dehydrogenase/cyclohydrolase family. In terms of assembly, homodimer.

The enzyme catalyses (6R)-5,10-methylene-5,6,7,8-tetrahydrofolate + NADP(+) = (6R)-5,10-methenyltetrahydrofolate + NADPH. The catalysed reaction is (6R)-5,10-methenyltetrahydrofolate + H2O = (6R)-10-formyltetrahydrofolate + H(+). Its pathway is one-carbon metabolism; tetrahydrofolate interconversion. Functionally, catalyzes the oxidation of 5,10-methylenetetrahydrofolate to 5,10-methenyltetrahydrofolate and then the hydrolysis of 5,10-methenyltetrahydrofolate to 10-formyltetrahydrofolate. This is Bifunctional protein FolD from Thiobacillus denitrificans (strain ATCC 25259 / T1).